A 163-amino-acid chain; its full sequence is Nucleotide-binding protein RER_17110 (163 aa).

Belongs to the YajQ family.

Nucleotide-binding protein. The sequence is that of Nucleotide-binding protein RER_17110 from Rhodococcus erythropolis (strain PR4 / NBRC 100887).